The primary structure comprises 265 residues: Indole-3-glycerol phosphate synthase (265 aa).

This sequence belongs to the TrpC family.

It catalyses the reaction 1-(2-carboxyphenylamino)-1-deoxy-D-ribulose 5-phosphate + H(+) = (1S,2R)-1-C-(indol-3-yl)glycerol 3-phosphate + CO2 + H2O. The protein operates within amino-acid biosynthesis; L-tryptophan biosynthesis; L-tryptophan from chorismate: step 4/5. The sequence is that of Indole-3-glycerol phosphate synthase from Xanthomonas campestris pv. campestris (strain 8004).